The chain runs to 432 residues: Glutamate-1-semialdehyde 2,1-aminomutase (432 aa).

N6-(pyridoxal phosphate)lysine is present on K270.

The protein belongs to the class-III pyridoxal-phosphate-dependent aminotransferase family. HemL subfamily. As to quaternary structure, homodimer. Requires pyridoxal 5'-phosphate as cofactor.

The protein resides in the cytoplasm. The catalysed reaction is (S)-4-amino-5-oxopentanoate = 5-aminolevulinate. Its pathway is porphyrin-containing compound metabolism; protoporphyrin-IX biosynthesis; 5-aminolevulinate from L-glutamyl-tRNA(Glu): step 2/2. The sequence is that of Glutamate-1-semialdehyde 2,1-aminomutase from Acinetobacter baumannii (strain ATCC 17978 / DSM 105126 / CIP 53.77 / LMG 1025 / NCDC KC755 / 5377).